The primary structure comprises 242 residues: Sugar fermentation stimulation protein homolog (242 aa).

Belongs to the SfsA family.

This Rippkaea orientalis (strain PCC 8801 / RF-1) (Cyanothece sp. (strain PCC 8801)) protein is Sugar fermentation stimulation protein homolog.